The chain runs to 339 residues: Dihydroorotate dehydrogenase (quinone) (339 aa).

FMN is bound by residues 62–66 and Thr-86; that span reads AGMDK. Lys-66 contributes to the substrate binding site. A substrate-binding site is contributed by 111–115; that stretch reads NRMGF. The FMN site is built by Asn-139 and Asn-172. Residue Asn-172 coordinates substrate. Catalysis depends on Ser-175, which acts as the Nucleophile. Asn-177 lines the substrate pocket. The FMN site is built by Lys-217 and Thr-245. Residue 246–247 participates in substrate binding; it reads NT. Residues Gly-268, Gly-297, and 318–319 each bind FMN; that span reads YS.

It belongs to the dihydroorotate dehydrogenase family. Type 2 subfamily. Monomer. FMN is required as a cofactor.

The protein localises to the cell membrane. The enzyme catalyses (S)-dihydroorotate + a quinone = orotate + a quinol. Its pathway is pyrimidine metabolism; UMP biosynthesis via de novo pathway; orotate from (S)-dihydroorotate (quinone route): step 1/1. Its function is as follows. Catalyzes the conversion of dihydroorotate to orotate with quinone as electron acceptor. The chain is Dihydroorotate dehydrogenase (quinone) from Shewanella sp. (strain MR-4).